A 471-amino-acid polypeptide reads, in one-letter code: 1,3-beta-glucanosyltransferase GAS4 (471 aa).

Residues 1–21 form the signal peptide; the sequence is MMVFSSTFIFLILELVVLCEA. The cysteines at positions 70 and 99 are disulfide-linked. Tyrosine 88 is a binding site for (1,3-beta-D-glucosyl)n. The N-linked (GlcNAc...) asparagine glycan is linked to asparagine 151. 4 residues coordinate (1,3-beta-D-glucosyl)n: asparagine 160, glutamate 161, aspartate 203, and arginine 208. Glutamate 161 (proton donor) is an active-site residue. Intrachain disulfides connect cysteine 217-cysteine 354 and cysteine 238-cysteine 269. The active-site Nucleophile is the glutamate 266. Tyrosine 298 lines the (1,3-beta-D-glucosyl)n pocket. An N-linked (GlcNAc...) asparagine glycan is attached at asparagine 398. Asparagine 447 is lipidated: GPI-anchor amidated asparagine. Positions 448 to 471 are cleaved as a propeptide — removed in mature form; the sequence is SASISGPLLPLGLCLLFFTFSLFF.

It belongs to the glycosyl hydrolase 72 family.

The protein localises to the cell membrane. Splits internally a 1,3-beta-glucan molecule and transfers the newly generated reducing end (the donor) to the non-reducing end of another 1,3-beta-glucan molecule (the acceptor) forming a 1,3-beta linkage, resulting in the elongation of 1,3-beta-glucan chains in the cell wall. Involved in spore wall assembly. This Saccharomyces cerevisiae (strain ATCC 204508 / S288c) (Baker's yeast) protein is 1,3-beta-glucanosyltransferase GAS4 (GAS4).